Reading from the N-terminus, the 1347-residue chain is Protein HUA2-LIKE 3 (1347 aa).

Residues 24-81 (VGDLVLAKVKGFPAWPAVVDEPEKWGHSADSKKVTVHFFGTQQIAFCNHGDVESFTEE) enclose the PWWP domain. Disordered regions lie at residues 110–137 (KLKQQDQASGPKYAEETTAGSSGNTSQL), 251–320 (DGGP…SGSK), and 383–402 (DSCQRSQNSHERLNERPCEE). Residues 127-137 (TAGSSGNTSQL) show a composition bias toward polar residues. Low complexity predominate over residues 302 to 314 (VESNNNSRNEGNG). Over residues 390–402 (NSHERLNERPCEE) the composition is skewed to basic and acidic residues. A CID domain is found at 845–986 (DVQCTVESFE…HHIRELDSLS (142 aa)). Disordered regions lie at residues 1037–1069 (RDEDEGSDSDGGDFESVTPEHESRSLEEHVTPS), 1121–1140 (TSHQNVTSSSPPARPSQNAQ), 1147–1223 (YSNG…YSYM), and 1259–1347 (RMRP…WHQR). A compositionally biased stretch (acidic residues) spans 1038–1049 (DEDEGSDSDGGD). Residues 1054-1069 (TPEHESRSLEEHVTPS) show a composition bias toward basic and acidic residues. Over residues 1181-1191 (PSYSSRVSLSK) the composition is skewed to polar residues. Residues 1208–1217 (SSHPPPPPPS) are compositionally biased toward pro residues. Basic and acidic residues predominate over residues 1259-1272 (RMRPEPCENRDNWR).

In terms of tissue distribution, expressed throughout young primordia, and vegetative and reproductive apices.

Its subcellular location is the nucleus. Functionally, probable transcription factor that acts with partial redundancy with HULK1 and HULK2. Plays diverse and essential roles in the control of plant development, physiology and flowering time. In Arabidopsis thaliana (Mouse-ear cress), this protein is Protein HUA2-LIKE 3.